A 1045-amino-acid chain; its full sequence is FERM, ARHGEF and pleckstrin domain-containing protein 1 (1045 aa).

Positions 1 to 37 (MGEIEQRPTPGSRLGAPENSGISTLERGQKPPPTPSG) are disordered. Phosphoserine is present on residues serine 20 and serine 23. The residue at position 24 (threonine 24) is a Phosphothreonine. The 281-residue stretch at 40-320 (VSIKIQMLDD…EHHAFFRLFE (281 aa)) folds into the FERM domain. 7 positions are modified to phosphoserine: serine 340, serine 373, serine 389, serine 403, serine 418, serine 427, and serine 433. Positions 392 to 534 (SASLTFGEGA…TDDEDEGRRK (143 aa)) are disordered. Composition is skewed to polar residues over residues 471 to 489 (TGSLTGSPHLSELSVNSQG) and 496 to 511 (VTLSPNLSPDTKQASP). A phosphoserine mark is found at serine 510 and serine 514. The DH domain maps to 540-730 (KAYFIAKEVS…TEMVAQLHGT (191 aa)). Positions 759-856 (EFIRLGSLSK…WVEDIQMAID (98 aa)) constitute a PH 1 domain. Phosphoserine occurs at positions 833, 872, and 878. Positions 866-902 (PEFLASSPPDNKSPDEATAADQESEDDLSASRTSLER) are disordered. The residue at position 883 (threonine 883) is a Phosphothreonine. 3 positions are modified to phosphoserine: serine 889, serine 896, and serine 899. Positions 932–1029 (ENQLSGNLLR…WMEVIRSATS (98 aa)) constitute a PH 2 domain.

In terms of assembly, interacts with CADM1. Interacts with RAC1.

The protein resides in the cell membrane. It localises to the synapse. It is found in the synaptosome. The protein localises to the cytoplasm. Its subcellular location is the cytosol. The protein resides in the cell projection. It localises to the filopodium. It is found in the dendrite. The protein localises to the dendritic spine. In terms of biological role, functions as a guanine nucleotide exchange factor for RAC1. May play a role in semaphorin signaling. Plays a role in the assembly and disassembly of dendritic filopodia, the formation of dendritic spines, regulation of dendrite length and ultimately the formation of synapses. This is FERM, ARHGEF and pleckstrin domain-containing protein 1 (FARP1) from Pongo abelii (Sumatran orangutan).